The sequence spans 286 residues: Puff II/9-2 protein (286 aa).

The N-terminal stretch at 1–19 (MKQFIVLTVVLLAIQELQG) is a signal peptide. The interval 61–235 (IDGLKKENNI…EKDLNTLRCE (175 aa)) is helical. A glycan (N-linked (GlcNAc...) asparagine) is linked at N156.

The sequence is that of Puff II/9-2 protein (II/9-2) from Bradysia coprophila (Dark-winged fungus gnat).